Consider the following 589-residue polypeptide: MAVARGVGSPEPAPPQLYKWGGCGLGEPGSALERRGAAARGRCGRARAPRLPDSFPRGECPKPGARAPRSVRCGEPLPPASPPPARPQAQRARPRAPHSRRRAMLHLSEFSEPDALLVKSTEGCCAEPSAELPRLPARDAPAATGYPGAGDFLSWALNSCGASGDLADSCFLEGPAPTPPPGLSYSGSFFIQAVPEHPHDPEALFNLMSGILGLAPFPGPEAAASRSPLDAPFPAGSDALLPGPPDLYSPDLGAAPFPEAFWEASPCAGAPSQCLYEPQLSPPDVKPGLRAPPASPALDAVSAFKGPYAPWELLSVGAPGNCGSQGDYQAAPEARFPVIGTKIEDLLSISCPAELPAVPANRLYPSGAYDAFPLAPGDLGEGAEGLPGLLTPPSGEGGSSGDGGEFLASTQPQLSPLGLRSAAAADFPKPLVADIPGSSGVAAPPVPPPPPTPFPQAKARRKGRRGGKCSTRCFCPRPHAKAFACPVESCVRSFARSDELNRHLRIHTGHKPFQCRICLRNFSRSDHLTTHVRTHTGEKPFACDVCGRRFARSDEKKRHSKVHLKQKARAEERLKGLGFYSLGLSFASL.

3 disordered regions span residues 29-101 (GSAL…HSRR), 383-411 (AEGL…ASTQ), and 436-466 (PGSS…GRRG). A compositionally biased stretch (pro residues) spans 76–86 (PLPPASPPPAR). A compositionally biased stretch (basic residues) spans 92–101 (ARPRAPHSRR). Residues 395 to 404 (GEGGSSGDGG) show a composition bias toward gly residues. Positions 444-454 (PPVPPPPPTPF) are enriched in pro residues. 3 C2H2-type zinc fingers span residues 483–507 (FACP…LRIH), 513–535 (FQCR…VRTH), and 541–563 (FACD…SKVH).

The protein belongs to the EGR C2H2-type zinc-finger protein family.

It localises to the nucleus. Its function is as follows. Transcriptional regulator. Recognizes and binds to the DNA sequence 5'-GCGGGGGCG-3' (GSG). Activates the transcription of target genes whose products are required for mitogenesis and differentiation. The polypeptide is Early growth response protein 4 (EGR4) (Homo sapiens (Human)).